A 232-amino-acid chain; its full sequence is Rho-related GTP-binding protein Rho6 (232 aa).

Residues 23–28 (QCGKTA), 38–45 (YPETYVPT), 67–71 (DTSGS), 125–128 (CKTD), and 169–170 (AF) each bind GTP. The Effector region motif lies at 42–50 (YVPTVFENY). A Cysteine methyl ester modification is found at Cys-229. Cys-229 carries the S-geranylgeranyl cysteine lipid modification. Residues 230 to 232 (SIM) constitute a propeptide, removed in mature form.

The protein belongs to the small GTPase superfamily. Rho family. In terms of assembly, binds GRB7 and PLXNB1. Interacts with UBXD5. Interacts with PLXNA2. As to expression, mostly expressed in brain and liver.

It is found in the cell membrane. It localises to the cytoplasm. The protein resides in the cytoskeleton. In terms of biological role, lacks intrinsic GTPase activity. Has a low affinity for GDP, and constitutively binds GTP. Controls rearrangements of the actin cytoskeleton. Induces the Rac-dependent neuritic process formation in part by disruption of the cortical actin filaments. Causes the formation of many neuritic processes from the cell body with disruption of the cortical actin filaments. The protein is Rho-related GTP-binding protein Rho6 (RND1) of Homo sapiens (Human).